Consider the following 673-residue polypeptide: G-protein-signaling modulator 1 (673 aa).

The segment at 1-507 (MASPAPPAAE…DLLSKFQSSR (507 aa)) is mediates association with membranes. 9 TPR repeats span residues 28–61 (CLEL…GTED), 66–99 (SAIY…ARTI), 106–139 (AKAS…AQEQ), 146–178 (ARAL…PPDV), 180–199 (ETLH…VKEL), 206–239 (GRAY…AKEF), 246–279 (RRAY…SRQI), 286–319 (AQAC…AQEL), and 326–359 (GRAC…SQEI). The interval 361–485 (DRNGELTARM…VRVQVPRTGI (125 aa)) is interaction with STK11/LKB1. The residue at position 410 (Ser410) is a Phosphoserine. Arg418 bears the Omega-N-methylarginine mark. Residues 420 to 439 (PLDREQNGETHHTGDWRGPS) show a composition bias toward basic and acidic residues. Residues 420 to 477 (PLDREQNGETHHTGDWRGPSRDSLPLPMRSRKYQEGPDAIERRPREGSHSPLDSADVR) are disordered. Phosphoserine occurs at positions 442, 467, 469, 490, and 491. Over residues 451–467 (KYQEGPDAIERRPREGS) the composition is skewed to basic and acidic residues. A GoLoco 1 domain is found at 493–515 (EECFFDLLSKFQSSRMDDQRCPL). Positions 510 to 544 (DQRCPLEEGQAGAAEATAAPTLEERAAQPSVTASP) are disordered. The span at 516 to 530 (EEGQAGAAEATAAPT) shows a compositional bias: low complexity. Residues Ser543 and Ser567 each carry the phosphoserine modification. GoLoco domains lie at 546–568 (TEEF…RASV), 594–616 (GDEF…RCPP), and 628–650 (DEDF…RVDL). Disordered stretches follow at residues 609-628 (IDDQ…TMPD) and 645-673 (EQRV…PGAS). Phosphoserine is present on Ser653.

This sequence belongs to the GPSM family. In terms of assembly, interacts with INSC/inscuteable and FRMPD1. Interacts with GNAI1, GNAI2 and GNAI3 preferentially in their GDP-bound state. May also interact with GNAO1. Interacts with STK11/LKB1 and MACF1. Post-translationally, phosphorylation regulates interaction with G(i/o) alpha. In terms of tissue distribution, isoform 4 is specifically expressed in brain by neurons and also detected in testis, liver, kidney, heart and pancreas (at protein level). Highly expressed in cerebellum and subventricular zone-olfactory bulb system. Isoform 2 and isoform 3 are specifically expressed in heart and are also detected in brain.

The protein resides in the endoplasmic reticulum membrane. Its subcellular location is the golgi apparatus membrane. It localises to the cell membrane. It is found in the cytoplasm. The protein localises to the cytosol. Guanine nucleotide dissociation inhibitor (GDI) which functions as a receptor-independent activator of heterotrimeric G-protein signaling. Keeps G(i/o) alpha subunit in its GDP-bound form thus uncoupling heterotrimeric G-proteins signaling from G protein-coupled receptors. Controls spindle orientation and asymmetric cell fate of cerebral cortical progenitors. May also be involved in macroautophagy in intestinal cells. May play a role in drug addiction. The protein is G-protein-signaling modulator 1 (Gpsm1) of Rattus norvegicus (Rat).